Consider the following 724-residue polypeptide: Semaphorin-2A (724 aa).

The N-terminal stretch at 1-25 (MSLLQLSPLLALLLLLCSSVSETAA) is a signal peptide. The Sema domain occupies 45–522 (QGNNNYGKHG…TDHRIKQIDL (478 aa)). Residue N95 is glycosylated (N-linked (GlcNAc...) asparagine). Cysteines 118 and 129 form a disulfide. N-linked (GlcNAc...) asparagine glycosylation is found at N163, N190, N229, and N314. 2 disulfides stabilise this stretch: C291–C399 and C315–C358. An N-linked (GlcNAc...) asparagine glycan is attached at N401. 2 disulfides stabilise this stretch: C525/C541 and C535/C550. The Ig-like C2-type domain occupies 552 to 663 (PYELDLLQDV…LCSYNITVDA (112 aa)). A glycan (N-linked (GlcNAc...) asparagine) is linked at N563. An intrachain disulfide couples C590 to C647. N-linked (GlcNAc...) asparagine glycosylation is found at N658, N670, and N708.

The protein belongs to the semaphorin family. Interacts with PlexB. Transiently expressed by a single large muscle during motoneuron outgrowth and synapse formation.

It localises to the secreted. Functionally, ligand for transmembrane receptor PlexB. Plays a role in growth cone guidance. Required for both proper adult behavior and survival. Can function as a selective target-derived signal that inhibits the formation of specific synaptic terminal arbors. Function in neurons is essential for adult survival, motor neuron survival, and is important for climbing behavior and activity. During embryogenesis, plays an important role in correct salivary gland positioning. The chain is Semaphorin-2A from Drosophila melanogaster (Fruit fly).